The following is a 216-amino-acid chain: Small ribosomal subunit protein uS5 (216 aa).

A disordered region spans residues 1-55 (MDRKLENQKDLLNQDPKVELNSQSVAKNPLNSREVKPIQRRRPLRKNSRDKNSKP). Positions 20-31 (LNSQSVAKNPLN) are enriched in polar residues. One can recognise an S5 DRBM domain in the interval 57–120 (FEERVIAIHR…KDAQNRLVSV (64 aa)).

Belongs to the universal ribosomal protein uS5 family. Part of the 30S ribosomal subunit. Contacts proteins S4 and S8.

Its function is as follows. With S4 and S12 plays an important role in translational accuracy. Functionally, located at the back of the 30S subunit body where it stabilizes the conformation of the head with respect to the body. This Mesomycoplasma hyopneumoniae (strain J / ATCC 25934 / NCTC 10110) (Mycoplasma hyopneumoniae) protein is Small ribosomal subunit protein uS5.